The following is a 159-amino-acid chain: 2-C-methyl-D-erythritol 2,4-cyclodiphosphate synthase (159 aa).

A divalent metal cation-binding residues include aspartate 8 and histidine 10. 4-CDP-2-C-methyl-D-erythritol 2-phosphate-binding positions include 8–10 (DVH) and 34–35 (HS). Residue histidine 42 participates in a divalent metal cation binding. Residues 56–58 (DIG), 61–65 (FPDTD), 132–135 (TTTE), phenylalanine 139, and arginine 142 contribute to the 4-CDP-2-C-methyl-D-erythritol 2-phosphate site.

The protein belongs to the IspF family. As to quaternary structure, homotrimer. A divalent metal cation is required as a cofactor.

It catalyses the reaction 4-CDP-2-C-methyl-D-erythritol 2-phosphate = 2-C-methyl-D-erythritol 2,4-cyclic diphosphate + CMP. Its pathway is isoprenoid biosynthesis; isopentenyl diphosphate biosynthesis via DXP pathway; isopentenyl diphosphate from 1-deoxy-D-xylulose 5-phosphate: step 4/6. In terms of biological role, involved in the biosynthesis of isopentenyl diphosphate (IPP) and dimethylallyl diphosphate (DMAPP), two major building blocks of isoprenoid compounds. Catalyzes the conversion of 4-diphosphocytidyl-2-C-methyl-D-erythritol 2-phosphate (CDP-ME2P) to 2-C-methyl-D-erythritol 2,4-cyclodiphosphate (ME-CPP) with a corresponding release of cytidine 5-monophosphate (CMP). The protein is 2-C-methyl-D-erythritol 2,4-cyclodiphosphate synthase of Syntrophobacter fumaroxidans (strain DSM 10017 / MPOB).